We begin with the raw amino-acid sequence, 354 residues long: Glycerol-3-phosphate dehydrogenase [NAD(P)+] (354 aa).

Residues serine 27, phenylalanine 28, arginine 48, and lysine 121 each contribute to the NADPH site. Sn-glycerol 3-phosphate-binding residues include lysine 121 and glycine 149. Position 153 (alanine 153) interacts with NADPH. Sn-glycerol 3-phosphate-binding residues include lysine 204, aspartate 257, serine 267, arginine 268, and asparagine 269. The active-site Proton acceptor is the lysine 204. Arginine 268 serves as a coordination point for NADPH. NADPH is bound by residues valine 292 and glutamate 294.

Belongs to the NAD-dependent glycerol-3-phosphate dehydrogenase family.

The protein localises to the cytoplasm. The catalysed reaction is sn-glycerol 3-phosphate + NAD(+) = dihydroxyacetone phosphate + NADH + H(+). The enzyme catalyses sn-glycerol 3-phosphate + NADP(+) = dihydroxyacetone phosphate + NADPH + H(+). It functions in the pathway membrane lipid metabolism; glycerophospholipid metabolism. In terms of biological role, catalyzes the reduction of the glycolytic intermediate dihydroxyacetone phosphate (DHAP) to sn-glycerol 3-phosphate (G3P), the key precursor for phospholipid synthesis. This chain is Glycerol-3-phosphate dehydrogenase [NAD(P)+], found in Pseudomonas fluorescens (strain Pf0-1).